The primary structure comprises 244 residues: tRNA (guanine-N(7)-)-methyltransferase (244 aa).

The segment at 1–24 (MTDSHVPHPESPAVEEGEERPHRR) is disordered. S-adenosyl-L-methionine-binding residues include Glu74, Glu99, Asp126, and Asp149. Asp149 is a catalytic residue. Substrate is bound by residues Lys153, Asp185, and 222 to 225 (TKFE).

Belongs to the class I-like SAM-binding methyltransferase superfamily. TrmB family.

The enzyme catalyses guanosine(46) in tRNA + S-adenosyl-L-methionine = N(7)-methylguanosine(46) in tRNA + S-adenosyl-L-homocysteine. It functions in the pathway tRNA modification; N(7)-methylguanine-tRNA biosynthesis. In terms of biological role, catalyzes the formation of N(7)-methylguanine at position 46 (m7G46) in tRNA. This chain is tRNA (guanine-N(7)-)-methyltransferase, found in Pseudomonas syringae pv. syringae (strain B728a).